Consider the following 367-residue polypeptide: Uptake hydrogenase small subunit (367 aa).

A signal peptide (tat-type signal) is located at residues 1–45 (MTPTETFYEVMRRQGVTRRSFLKFCSLTATALGLGPAYTSEIAHA). Residues Cys-62, Cys-65, Cys-160, Cys-194, His-232, Cys-235, Cys-260, and Cys-266 each contribute to the [4Fe-4S] cluster site. Residues Cys-275, Cys-294, and Cys-297 each coordinate [3Fe-4S] cluster.

This sequence belongs to the [NiFe]/[NiFeSe] hydrogenase small subunit family. As to quaternary structure, heterodimer of a large and a small subunit. It depends on [4Fe-4S] cluster as a cofactor. Requires [3Fe-4S] cluster as cofactor. Post-translationally, predicted to be exported by the Tat system. The position of the signal peptide cleavage has been experimentally proven.

Its subcellular location is the cell membrane. It carries out the reaction H2 + A = AH2. This enzyme recycles the H(2) produced by nitrogenase to increase the production of ATP and to protect nitrogenase against inhibition or damage by O(2) under carbon- or phosphate-limited conditions. In Afipia carboxidovorans (strain ATCC 49405 / DSM 1227 / KCTC 32145 / OM5) (Oligotropha carboxidovorans), this protein is Uptake hydrogenase small subunit (hoxS).